The chain runs to 488 residues: RNA binding exosome specificity factor Mmi1 (488 aa).

3 stretches are compositionally biased toward polar residues: residues 1 to 14, 33 to 47, and 54 to 66; these read MSNTNFSTSRSSKS, LNESGDTRSVWTTHT, and SVLSTSGSNNFSS. Disordered regions lie at residues 1–20 and 25–80; these read MSNTNFSTSRSSKSIPELPN and RSLW…DAPI. Residues 71 to 80 show a composition bias toward basic and acidic residues; sequence PAPESHDAPI. The interval 95–122 is interaction with erh1; sequence GKYDFSRHCTDYGHSYEWPYFRSLRRES. 2 disordered regions span residues 163-185 and 225-261; these read SRLHGIQPPPKRRTLSPPPRRLA and SYPVRSSPQLSHEDTRHGIASSGSTRYPFVPANTRAS. At Thr176 the chain carries Phosphothreonine. Ser178, Ser230, Ser231, Ser261, Ser263, and Ser265 each carry phosphoserine. Positions 289 to 299 are enriched in low complexity; the sequence is SYLLSNSSNDS. The segment at 289-328 is disordered; it reads SYLLSNSSNDSASRKEKPKARASTPPPLNFSRASEHRNEK. Ser311 carries the post-translational modification Phosphoserine. Thr312 carries the phosphothreonine modification. Residues 350–476 form the YTH domain; the sequence is SRYFIMLCDN…DEGSRLCTLI (127 aa).

In terms of assembly, component of the erh1-mmi1 complex composed of mmi1 and erh1. Interacts (via N-terminus) with erh1 in a 2:2 stoichiometry. Interacts with rrp6.

The protein resides in the nucleus. In terms of biological role, RNA-binding protein that recognizes and binds N6-methyladenosine (m6A)-containing RNAs, a modification present at internal sites of mRNAs and some non-coding RNAs. Functions alone and as part of the erh1-mmi1 complex, to recruit the CCR4-NOT complex and the NURS complex to target RNAs. Suppresses the meiotic program during vegetative growth and promotes the meiotic program during mating. Binds to DSR (determinant of selective removal) regions in meiotic mRNA, and recruits the NURS complex to targets. Recruitment of NURS complex to target mRNAs promotes mRNA decay by engagement of the nuclear exosome, and formation of heterochromatin islands at meiotic genes silenced by the exosome. Recruitment of the CCR4-NOT complex to target RNAs promotes heterochromatin formation at RNAi-dependent heterochromatin domains (HOODs), including a subset of meiotic genes, lncRNAs and retrotransposons. Recruitment of the CCR4-NOT complex to rDNA promotes rDNA heterochromatin assembly. Promotes non-canonical transcription termination at meiotic genes and prevents lncRNA transcription from invading and repressing adjacent genes. The polypeptide is RNA binding exosome specificity factor Mmi1 (mmi1) (Schizosaccharomyces pombe (strain 972 / ATCC 24843) (Fission yeast)).